The primary structure comprises 345 residues: Fe-S cluster assembly protein DRE2 (345 aa).

Residues 29-163 (GDSGDRTLLL…KPDYAEQEVV (135 aa)) are N-terminal SAM-like domain. Residues 164-237 (PLRFGAKKVN…EDTLLTEADL (74 aa)) form a linker region. [2Fe-2S] cluster is bound by residues Cys247, Cys258, Cys261, and Cys263. Residues 247–263 (CAPQPGKKRRACKDCTC) are fe-S binding site A. [4Fe-4S] cluster contacts are provided by Cys308, Cys311, Cys319, and Cys322. Short sequence motifs (cx2C motif) lie at residues 308–311 (CNSC) and 319–322 (CADC). The fe-S binding site B stretch occupies residues 308-322 (CNSCYLGDAFRCADC).

It belongs to the anamorsin family. Monomer. Interacts with TAH18. Interacts with MIA40. The cofactor is [2Fe-2S] cluster. It depends on [4Fe-4S] cluster as a cofactor.

The protein localises to the cytoplasm. It localises to the mitochondrion intermembrane space. Functionally, component of the cytosolic iron-sulfur (Fe-S) protein assembly (CIA) machinery required for the maturation of extramitochondrial Fe-S proteins. Part of an electron transfer chain functioning in an early step of cytosolic Fe-S biogenesis, facilitating the de novo assembly of a [4Fe-4S] cluster on the scaffold complex CFD1-NBP35. Electrons are transferred to DRE2 from NADPH via the FAD- and FMN-containing protein TAH18. TAH18-DRE2 are also required for the assembly of the diferric tyrosyl radical cofactor of ribonucleotide reductase (RNR), probably by providing electrons for reduction during radical cofactor maturation in the catalytic small subunit RNR2. This is Fe-S cluster assembly protein DRE2 from Podospora anserina (strain S / ATCC MYA-4624 / DSM 980 / FGSC 10383) (Pleurage anserina).